Here is a 298-residue protein sequence, read N- to C-terminus: MNALTLPDIARQTTLSTLPLDWVGMQGIALPVQVAGQTVAAEADAGVSLDDPQARGIHMSRLYLALAGLEDGELDLPRLRGVLQRFLDSHADLSRRAYLRLRLAPLLRRPALVSPLSGWKRYPLVLDTRLENGTFQADLHLELTYSSTCPCSAALARQLIQERFAQDFAGQQPDHATILAWLGSSDGIVATPHSQRSSAQLRIGLAEDCAGLPLEELADLGECALGTAVQTAVKRADEQAFALANGQNLMFCEDAVRRLHRALRGYPQAREFSVRVVHAESLHAHDAVAESHWQRGAA.

The protein belongs to the GTP cyclohydrolase IV family.

It catalyses the reaction GTP + H2O = 7,8-dihydroneopterin 3'-triphosphate + formate + H(+). It participates in cofactor biosynthesis; 7,8-dihydroneopterin triphosphate biosynthesis; 7,8-dihydroneopterin triphosphate from GTP: step 1/1. Functionally, converts GTP to 7,8-dihydroneopterin triphosphate. The sequence is that of GTP cyclohydrolase FolE2 from Pseudomonas paraeruginosa (strain DSM 24068 / PA7) (Pseudomonas aeruginosa (strain PA7)).